The primary structure comprises 453 residues: F-box/FBD/LRR-repeat protein At4g00160 (453 aa).

Positions Lys15–Lys68 constitute an F-box domain. LRR repeat units follow at residues Leu89 to Gly111, Met165 to Gly190, Val215 to Ala239, Ile247 to Gly270, Leu282 to Gln307, and Ser331 to Glu358. The FBD domain maps to Lys355 to Thr406.

This Arabidopsis thaliana (Mouse-ear cress) protein is F-box/FBD/LRR-repeat protein At4g00160.